Reading from the N-terminus, the 856-residue chain is DNA mismatch repair protein MutS (856 aa).

607 to 614 contacts ATP; that stretch reads GPNMSGKS.

Belongs to the DNA mismatch repair MutS family.

Its function is as follows. This protein is involved in the repair of mismatches in DNA. It is possible that it carries out the mismatch recognition step. This protein has a weak ATPase activity. This Lactobacillus delbrueckii subsp. bulgaricus (strain ATCC 11842 / DSM 20081 / BCRC 10696 / JCM 1002 / NBRC 13953 / NCIMB 11778 / NCTC 12712 / WDCM 00102 / Lb 14) protein is DNA mismatch repair protein MutS.